Consider the following 66-residue polypeptide: Phylloseptin-S4 (66 aa).

Positions Met1 to Cys22 are cleaved as a signal peptide. Positions Glu23 to Arg46 are excised as a propeptide. The interval Glu25 to Glu44 is disordered. Positions Glu30–Lys41 are enriched in acidic residues. A Leucine amide modification is found at Leu65.

In terms of tissue distribution, expressed by the skin glands.

It localises to the secreted. The protein localises to the target cell membrane. Its function is as follows. Antimicrobial peptide with high activity against Gram-positive bacteria, moderate activity against Gram-negative bacteria, and moderate activity against fungi. Acts by causing bacterial membrane disruption inducing leakage of the intracellular content followed by cell death. It adopts an alpha-helical amphipathic structure in membrane environments. Also shows highly potent antiparasitic activity against Leishmania species. Shows moderate hemolytic activity on human erythrocytes (LC(50)=33 uM). Is also active on human monocytes (IC(50)=23 uM). In Phyllomedusa sauvagei (Sauvage's leaf frog), this protein is Phylloseptin-S4.